A 477-amino-acid polypeptide reads, in one-letter code: E3 ubiquitin-protein ligase TRIM17 (477 aa).

The segment at 16–66 adopts an RING-type zinc-finger fold; sequence CSICLDYFTDPVMTACGHNFCRECIQMSWEKGKGKKGKKKQKGSFPCPECR. The segment at 94 to 135 adopts a B box-type zinc-finger fold; the sequence is HKRDLCQIHQEPLKLFCQDDQTPICVVCREAQEHRMHRVLPL. C99, H102, C121, and H127 together coordinate Zn(2+). Residues 135 to 225 are a coiled coil; the sequence is LDEAAREYKL…GKLQDSKASL (91 aa). The B30.2/SPRY domain maps to 276–475; sequence AIKTVCRVPG…MVISTVTMWV (200 aa).

Belongs to the TRIM/RBCC family. In terms of assembly, interacts (via coiled coil) with TRIM44 (via coiled coil). Interacts with TRIM28; this interaction prevents TRIM28 activity on BCL2A1. Interacts with TRIM41; this interaction prevents TRIM41 activity on ZSCAN2. Interacts with BECN1. Interacts with NFATC3 and NFATC4; these interactions prevent NFATC3 and NFATC4 nuclear localization. Auto-ubiquitinated. As to expression, expressed almost exclusively in the testis.

Its subcellular location is the cytoplasm. It is found in the lysosome. It catalyses the reaction S-ubiquitinyl-[E2 ubiquitin-conjugating enzyme]-L-cysteine + [acceptor protein]-L-lysine = [E2 ubiquitin-conjugating enzyme]-L-cysteine + N(6)-ubiquitinyl-[acceptor protein]-L-lysine.. It participates in protein modification; protein ubiquitination. In terms of biological role, E3 ubiquitin ligase that plays important roles in the regulation of neuronal apoptosis, selective autophagy or cell proliferation. Stimulates the degradation of kinetochore ZW10 interacting protein ZWINT in a proteasome-dependent manner, leading to negative regulation of cell proliferation. Inhibits autophagic degradation of diverse known targets while contributing to autophagy of midbodies. Autophagy-inhibitory activity involves MCL1, which TRIM17 assembles into complexes with the key autophagy regulator BECN1. Controls neuronal apoptosis by mediating ubiquitination and degradation of MCL1 to initiate neuronal death. In addition, regulates NFAT transcription factors NFATC3 and NFATC4 activities by preventing their nuclear localization, thus inhibiting their transcriptional activities. Decreases TRIM41-mediated degradation of ZSCAN2 thereby stimulating alpha-synuclein/SNCA transcription in neuronal cells. Prevents the E3 ubiquitin-ligase activity of TRIM28 and its interaction with anti-apoptotic BCL2A1, blocking TRIM28 from ubiquitinating BCL2A1. This is E3 ubiquitin-protein ligase TRIM17 (Trim17) from Rattus norvegicus (Rat).